Here is a 239-residue protein sequence, read N- to C-terminus: MRQSGRKSNQLRPISLELSPLINAEGSCLIKIGNTHVMCSATCETTVPPFLRGQNQGWVTAEYGMLPGSTSQRIKREAAQGKQGGRTQEIQRLIGRNMRCVIDLKKLGERQIIIDCDVINADGGTRTAAITGSYVALHLAIRSLMKKRILKVNPLISQIAAVSCGIYKGEAILDLDYLEDSDAEVDSNFVFAGNGNLIEVQGTAEKEPFSEEQFIAMLKLAKGGAAELFKLQNQVLLGA.

Phosphate is bound by residues Arg86 and 124–126; that span reads GTR.

It belongs to the RNase PH family. In terms of assembly, homohexameric ring arranged as a trimer of dimers.

It carries out the reaction tRNA(n+1) + phosphate = tRNA(n) + a ribonucleoside 5'-diphosphate. Functionally, phosphorolytic 3'-5' exoribonuclease that plays an important role in tRNA 3'-end maturation. Removes nucleotide residues following the 3'-CCA terminus of tRNAs; can also add nucleotides to the ends of RNA molecules by using nucleoside diphosphates as substrates, but this may not be physiologically important. Probably plays a role in initiation of 16S rRNA degradation (leading to ribosome degradation) during starvation. The chain is Ribonuclease PH from Rickettsia felis (strain ATCC VR-1525 / URRWXCal2) (Rickettsia azadi).